A 191-amino-acid polypeptide reads, in one-letter code: dCTP deaminase, dUMP-forming (191 aa).

DCTP contacts are provided by residues 101–106 (KSSLGR), Asp119, 127–129 (TLE), Gln148, Tyr162, and Gln174. Glu129 functions as the Proton donor/acceptor in the catalytic mechanism.

This sequence belongs to the dCTP deaminase family. In terms of assembly, homotrimer.

It catalyses the reaction dCTP + 2 H2O = dUMP + NH4(+) + diphosphate. Its pathway is pyrimidine metabolism; dUMP biosynthesis; dUMP from dCTP: step 1/1. Bifunctional enzyme that catalyzes both the deamination of dCTP to dUTP and the hydrolysis of dUTP to dUMP without releasing the toxic dUTP intermediate. In Streptomyces coelicolor (strain ATCC BAA-471 / A3(2) / M145), this protein is dCTP deaminase, dUMP-forming.